Reading from the N-terminus, the 208-residue chain is LexA repressor (208 aa).

The H-T-H motif DNA-binding region spans 29–49; it reads VREICGAVGLSSTSTVHGHIN. Active-site for autocatalytic cleavage activity residues include Ser-129 and Lys-167.

This sequence belongs to the peptidase S24 family. Homodimer.

It catalyses the reaction Hydrolysis of Ala-|-Gly bond in repressor LexA.. Functionally, represses a number of genes involved in the response to DNA damage (SOS response), including recA and lexA. In the presence of single-stranded DNA, RecA interacts with LexA causing an autocatalytic cleavage which disrupts the DNA-binding part of LexA, leading to derepression of the SOS regulon and eventually DNA repair. The sequence is that of LexA repressor from Limosilactobacillus fermentum (strain NBRC 3956 / LMG 18251) (Lactobacillus fermentum).